The chain runs to 455 residues: Polyadenylation factor subunit 2 (455 aa).

WD repeat units lie at residues 80 to 119 (KVKH…FETI), 122 to 162 (AHDT…KELD), 164 to 203 (IHTE…QERV), 206 to 245 (GHHW…CVST), 248 to 288 (KFKH…NELM), 291 to 331 (RDEV…EKPI), and 337 to 376 (AHEK…DPNA). Disordered stretches follow at residues 406–425 (EYGA…TQYN) and 430–455 (RVPE…GLSI). The segment covering 432–446 (PEIKEPTPTTDKEQR) has biased composition (basic and acidic residues).

It is found in the nucleus. Required for 3'-end cleavage and polyadenylation of pre-mRNAs. Also involved in chromosome segregation where it has a role in chromosome attachment to the mitotic spindle. The chain is Polyadenylation factor subunit 2 (PFS2) from Candida glabrata (strain ATCC 2001 / BCRC 20586 / JCM 3761 / NBRC 0622 / NRRL Y-65 / CBS 138) (Yeast).